The primary structure comprises 173 residues: HTH-type transcriptional regulator IscR (173 aa).

The 130-residue stretch at 2–131 (KLTSKGRYAV…NDITLGELMK (130 aa)) folds into the HTH rrf2-type domain. A DNA-binding region (H-T-H motif) is located at residues 28–51 (LADISERQGISLSYLEQLFSKLRK). Cys-92, Cys-98, and Cys-104 together coordinate [2Fe-2S] cluster.

It depends on [2Fe-2S] cluster as a cofactor.

In terms of biological role, regulates the transcription of several operons and genes involved in the biogenesis of Fe-S clusters and Fe-S-containing proteins. The chain is HTH-type transcriptional regulator IscR from Vibrio atlanticus (strain LGP32) (Vibrio splendidus (strain Mel32)).